The following is a 327-amino-acid chain: N-acetyl-gamma-glutamyl-phosphate reductase (327 aa).

The active site involves cysteine 136.

It belongs to the NAGSA dehydrogenase family. Type 1 subfamily.

The protein resides in the cytoplasm. The catalysed reaction is N-acetyl-L-glutamate 5-semialdehyde + phosphate + NADP(+) = N-acetyl-L-glutamyl 5-phosphate + NADPH + H(+). It functions in the pathway amino-acid biosynthesis; L-arginine biosynthesis; N(2)-acetyl-L-ornithine from L-glutamate: step 3/4. Functionally, catalyzes the NADPH-dependent reduction of N-acetyl-5-glutamyl phosphate to yield N-acetyl-L-glutamate 5-semialdehyde. This Xylella fastidiosa (strain M23) protein is N-acetyl-gamma-glutamyl-phosphate reductase.